The chain runs to 148 residues: Hemoglobin subunit beta-2 (148 aa).

Residues 3 to 148 enclose the Globin domain; that stretch reads EWTDAERTAI…VVSALCRQYH (146 aa). His64 and His93 together coordinate heme b.

In terms of assembly, heterotetramer of two alpha chains and two beta chains. Red blood cells.

In terms of biological role, involved in oxygen transport from gills to the various peripheral tissues. This is Hemoglobin subunit beta-2 (ba2) from Danio rerio (Zebrafish).